The chain runs to 233 residues: ATP synthase subunit a (233 aa).

The next 7 helical transmembrane spans lie at 29–49 (FKHV…SFIV), 60–80 (LQNI…SITG), 89–109 (VLIV…VPGF), 115–135 (NINT…YIGI), 143–163 (IKHF…LELI), 185–205 (FVLI…IYFL), and 206–226 (FTLA…IYLK).

The protein belongs to the ATPase A chain family. In terms of assembly, F-type ATPases have 2 components, CF(1) - the catalytic core - and CF(0) - the membrane proton channel. CF(1) has five subunits: alpha(3), beta(3), gamma(1), delta(1), epsilon(1). CF(0) has three main subunits: a(1), b(2) and c(9-12). The alpha and beta chains form an alternating ring which encloses part of the gamma chain. CF(1) is attached to CF(0) by a central stalk formed by the gamma and epsilon chains, while a peripheral stalk is formed by the delta and b chains.

The protein localises to the cell inner membrane. Its function is as follows. Key component of the proton channel; it plays a direct role in the translocation of protons across the membrane. The chain is ATP synthase subunit a from Oleidesulfovibrio alaskensis (strain ATCC BAA-1058 / DSM 17464 / G20) (Desulfovibrio alaskensis).